The sequence spans 440 residues: Cytochrome c biogenesis protein Ccs1 (440 aa).

The next 3 membrane-spanning stretches (helical) occupy residues 19-39, 78-98, and 164-184; these read LRLA…GTFI, NIWF…CTYT, and VGPI…ACGA.

Belongs to the Ccs1/CcsB family. As to quaternary structure, may interact with CcsA.

Its subcellular location is the plastid. The protein localises to the chloroplast thylakoid membrane. Its function is as follows. Required during biogenesis of c-type cytochromes (cytochrome c6 and cytochrome f) at the step of heme attachment. The chain is Cytochrome c biogenesis protein Ccs1 from Emiliania huxleyi (Coccolithophore).